The following is a 152-amino-acid chain: Small ribosomal subunit protein uS8m (152 aa).

It belongs to the universal ribosomal protein uS8 family. As to quaternary structure, component of the mitochondrial small ribosomal subunit (mt-SSU). Mature yeast 74S mitochondrial ribosomes consist of a small (37S) and a large (54S) subunit. The 37S small subunit contains a 15S ribosomal RNA (15S mt-rRNA) and at least 32 different proteins. The 54S large subunit contains a 21S rRNA (21S mt-rRNA) and at least 45 different proteins.

The protein localises to the mitochondrion. Functionally, component of the mitochondrial ribosome (mitoribosome), a dedicated translation machinery responsible for the synthesis of mitochondrial genome-encoded proteins, including at least some of the essential transmembrane subunits of the mitochondrial respiratory chain. The mitoribosomes are attached to the mitochondrial inner membrane and translation products are cotranslationally integrated into the membrane. The polypeptide is Small ribosomal subunit protein uS8m (mrps8) (Schizosaccharomyces pombe (strain 972 / ATCC 24843) (Fission yeast)).